Reading from the N-terminus, the 427-residue chain is Enolase (427 aa).

Residue glutamine 163 coordinates (2R)-2-phosphoglycerate. Residue glutamate 205 is the Proton donor of the active site. Residues aspartate 242, glutamate 285, and aspartate 312 each contribute to the Mg(2+) site. (2R)-2-phosphoglycerate is bound by residues lysine 337, arginine 366, serine 367, and lysine 388. The active-site Proton acceptor is lysine 337.

It belongs to the enolase family. Mg(2+) serves as cofactor.

It localises to the cytoplasm. It is found in the secreted. The protein resides in the cell surface. It carries out the reaction (2R)-2-phosphoglycerate = phosphoenolpyruvate + H2O. It participates in carbohydrate degradation; glycolysis; pyruvate from D-glyceraldehyde 3-phosphate: step 4/5. Its function is as follows. Catalyzes the reversible conversion of 2-phosphoglycerate (2-PG) into phosphoenolpyruvate (PEP). It is essential for the degradation of carbohydrates via glycolysis. The sequence is that of Enolase from Herminiimonas arsenicoxydans.